Consider the following 206-residue polypeptide: Triafestin-1 (206 aa).

The first 18 residues, 1 to 18 (MKTILAVIFFGILAFAFA), serve as a signal peptide directing secretion. Asparagine 55 carries N-linked (GlcNAc...) asparagine glycosylation.

Belongs to the calycin superfamily. Triabin family. Interacts with host coagulation factor XII (F12) (inactive and activated) (via amino acids 1-77). Interacts with host high molecular weight kininogen (KNG1) (via amino acids 402-532). As to expression, salivary gland (at protein level).

The protein resides in the secreted. With respect to regulation, zn(2+) modulates binding to host coagulation factor XII (F12) and high molecular weight kininogen (KNG1). Its function is as follows. Suppresses activation of the host plasma kallikrein-kinin system, leading to inhibition of the intrinsic coagulation pathway. Blocks host coagulation factor XII (F12) and prekallikrein (KLKB1) reciprocal activation without affecting their amidolytic activities. Blocks binding of host F12 and high molecular weight kininogen (KNG1) to negatively charged surfaces. Attenuates generation of bradykinin by interfering with activation of host kallikrein-kinin system. This chain is Triafestin-1, found in Triatoma infestans (Assassin bug).